The following is a 244-amino-acid chain: Protein DCG1 (244 aa).

It belongs to the HyuE racemase family.

This Saccharomyces cerevisiae (strain ATCC 204508 / S288c) (Baker's yeast) protein is Protein DCG1 (DCG1).